Consider the following 227-residue polypeptide: 2,3-bisphosphoglycerate-dependent phosphoglycerate mutase (227 aa).

Substrate contacts are provided by residues 7–14 (RHGLSEWN), 20–21 (TG), Arg-59, 86–89 (ERHY), Lys-97, 113–114 (RR), and 182–183 (GN). The Tele-phosphohistidine intermediate role is filled by His-8. The Proton donor/acceptor role is filled by Glu-86.

The protein belongs to the phosphoglycerate mutase family. BPG-dependent PGAM subfamily. In terms of assembly, homodimer.

The enzyme catalyses (2R)-2-phosphoglycerate = (2R)-3-phosphoglycerate. The protein operates within carbohydrate degradation; glycolysis; pyruvate from D-glyceraldehyde 3-phosphate: step 3/5. Functionally, catalyzes the interconversion of 2-phosphoglycerate and 3-phosphoglycerate. The chain is 2,3-bisphosphoglycerate-dependent phosphoglycerate mutase from Mannheimia succiniciproducens (strain KCTC 0769BP / MBEL55E).